The chain runs to 496 residues: Ganglioside-induced differentiation-associated protein 2 (496 aa).

The tract at residues E25–P48 is disordered. Positions H44 to F224 constitute a Macro domain. The region spanning D329–N483 is the CRAL-TRIO domain.

It belongs to the GDAP2 family.

This is Ganglioside-induced differentiation-associated protein 2 from Xenopus laevis (African clawed frog).